Reading from the N-terminus, the 756-residue chain is Anaphase-promoting complex subunit 5 (756 aa).

TPR repeat units lie at residues 301 to 334 (RYAA…AQES), 522 to 555 (DGRY…KAQN), 581 to 614 (ISVL…SREY), and 678 to 711 (YSQQ…EQLR).

The protein belongs to the APC5 family. The APC/C is composed of at least 12 subunits.

It localises to the nucleus. The protein resides in the cytoplasm. It is found in the cytoskeleton. Its subcellular location is the spindle. Its pathway is protein modification; protein ubiquitination. Its function is as follows. Component of the anaphase promoting complex/cyclosome (APC/C), a cell cycle-regulated E3 ubiquitin ligase that controls progression through mitosis and the G1 phase of the cell cycle. The APC/C complex acts by mediating ubiquitination and subsequent degradation of target proteins: it mainly mediates the formation of 'Lys-11'-linked polyubiquitin chains and, to a lower extent, the formation of 'Lys-48'- and 'Lys-63'-linked polyubiquitin chains. The APC/C complex catalyzes assembly of branched 'Lys-11'-/'Lys-48'-linked branched ubiquitin chains on target proteins. In Gallus gallus (Chicken), this protein is Anaphase-promoting complex subunit 5 (ANAPC5).